We begin with the raw amino-acid sequence, 85 residues long: Probable weak neurotoxin 3FTx-Lio1 (85 aa).

The first 18 residues, 1–18 (MKAVILSLVAAFLYSGYT), serve as a signal peptide directing secretion. 5 disulfide bridges follow: Cys-21–Cys-42, Cys-24–Cys-29, Cys-35–Cys-60, Cys-64–Cys-75, and Cys-76–Cys-81.

This sequence belongs to the three-finger toxin family. Ancestral subfamily. As to expression, expressed by the venom gland.

It localises to the secreted. In Erythrolamprus poecilogyrus (Water snake), this protein is Probable weak neurotoxin 3FTx-Lio1.